Consider the following 388-residue polypeptide: Fibrinogen- and Ig-binding protein (388 aa).

The first 41 residues, 1-41, serve as a signal peptide directing secretion; it reads MSKTNPNKLYSLRKLKTGTASVAVDLTVLGTGLANTTDVKA. 4 D repeats span residues 288 to 293, 294 to 299, 302 to 307, and 309 to 314; these read EKLEAE, AKALKE, AKQAEE, and AKLKAD. The tract at residues 308–362 is disordered; the sequence is LAKLKADKASGAQKPDTKPGNKEVPTRPSQTRTNTNKAPMAQTKRQLPSTGEETT. Positions 322 to 332 are enriched in basic and acidic residues; the sequence is PDTKPGNKEVP. Residues 334 to 362 are compositionally biased toward polar residues; that stretch reads RPSQTRTNTNKAPMAQTKRQLPSTGEETT. The LPXTG sorting signal motif lies at 354-358; that stretch reads LPSTG. The residue at position 357 (Thr357) is a Pentaglycyl murein peptidoglycan amidated threonine. The propeptide at 358-388 is removed by sortase; it reads GEETTNPFFTAAALTVIASAGVLALKRKEEN.

Its subcellular location is the secreted. The protein localises to the cell wall. Its function is as follows. Binds IgG molecules of the Ig1, Ig2 and Ig4 subclasses, and also binds fibrinogen. This Streptococcus pyogenes protein is Fibrinogen- and Ig-binding protein (mrp4).